A 67-amino-acid polypeptide reads, in one-letter code: Probable Sec-independent protein translocase protein TatE (67 aa).

The helical transmembrane segment at I4–G21 threads the bilayer.

This sequence belongs to the TatA/E family. TatE subfamily.

The protein localises to the cell inner membrane. Its function is as follows. Part of the twin-arginine translocation (Tat) system that transports large folded proteins containing a characteristic twin-arginine motif in their signal peptide across membranes. TatE shares overlapping functions with TatA. The sequence is that of Probable Sec-independent protein translocase protein TatE from Citrobacter rodentium (strain ICC168) (Citrobacter freundii biotype 4280).